A 350-amino-acid polypeptide reads, in one-letter code: Holliday junction branch migration complex subunit RuvB (350 aa).

The interval 1–182 (MEDRIVTPLN…FGVLCPMDFY (182 aa)) is large ATPase domain (RuvB-L). Residues Leu-21, Arg-22, Gly-63, Lys-66, Thr-67, Thr-68, 129–131 (EDY), Arg-172, Tyr-182, and Arg-219 each bind ATP. Residue Thr-67 participates in Mg(2+) binding. Residues 183-253 (DQEELSEIVV…TSKAALELLE (71 aa)) form a small ATPAse domain (RuvB-S) region. The segment at 256-350 (KEGFDSIDNK…KQSSLFDGEV (95 aa)) is head domain (RuvB-H). DNA contacts are provided by Arg-311 and Arg-316.

It belongs to the RuvB family. In terms of assembly, homohexamer. Forms an RuvA(8)-RuvB(12)-Holliday junction (HJ) complex. HJ DNA is sandwiched between 2 RuvA tetramers; dsDNA enters through RuvA and exits via RuvB. An RuvB hexamer assembles on each DNA strand where it exits the tetramer. Each RuvB hexamer is contacted by two RuvA subunits (via domain III) on 2 adjacent RuvB subunits; this complex drives branch migration. In the full resolvosome a probable DNA-RuvA(4)-RuvB(12)-RuvC(2) complex forms which resolves the HJ.

It is found in the cytoplasm. It catalyses the reaction ATP + H2O = ADP + phosphate + H(+). In terms of biological role, the RuvA-RuvB-RuvC complex processes Holliday junction (HJ) DNA during genetic recombination and DNA repair, while the RuvA-RuvB complex plays an important role in the rescue of blocked DNA replication forks via replication fork reversal (RFR). RuvA specifically binds to HJ cruciform DNA, conferring on it an open structure. The RuvB hexamer acts as an ATP-dependent pump, pulling dsDNA into and through the RuvAB complex. RuvB forms 2 homohexamers on either side of HJ DNA bound by 1 or 2 RuvA tetramers; 4 subunits per hexamer contact DNA at a time. Coordinated motions by a converter formed by DNA-disengaged RuvB subunits stimulates ATP hydrolysis and nucleotide exchange. Immobilization of the converter enables RuvB to convert the ATP-contained energy into a lever motion, pulling 2 nucleotides of DNA out of the RuvA tetramer per ATP hydrolyzed, thus driving DNA branch migration. The RuvB motors rotate together with the DNA substrate, which together with the progressing nucleotide cycle form the mechanistic basis for DNA recombination by continuous HJ branch migration. Branch migration allows RuvC to scan DNA until it finds its consensus sequence, where it cleaves and resolves cruciform DNA. The polypeptide is Holliday junction branch migration complex subunit RuvB (Clostridium kluyveri (strain NBRC 12016)).